The following is a 506-amino-acid chain: MERIRPPTVVSQRKRQKGMYSPKLSCGYEIKFNKLVIFIMQRKMGMTRRTFLMELARSKGFRVESELSDSVTHIVAENNSYPEVLDWLKGQAVGDSSRFEILDISWLTACMEMGRPVDLEKKYHLVEQAGQYPTLKTPESEVSSFTASKVSQYSCQRKTTLNNCNKKFTDAFEIMAENYEFKENEIFCLEFLRAASVLKSLPFPVTRMKDIQGLPCMGDRVRDVIEEIIEEGESSRAKDVLNDERYKSFKEFTSVFGVGVKTSEKWFRMGLRTVEEVKADKTLKLSKMQRAGFLYYEDLVSCVSKAEADAVSSIVKNTVCTFLPDALVTITGGFRRGKKIGHDIDFLITSPGQREDDELLHKGLLLYCDIIESTFVKEQIPSRHVDAMDHFQKCFAILKLYQPRVDNSSYNMSKKCDMAEVKDWKAIRVDLVITPFEQYAYALLGWTGSRQFGRDLRRYATHERKMMLDNHALYDKRKRVFLKAGSEEEIFAHLGLDYVEPWERNA.

Positions 11–17 (SQRKRQK) match the Nuclear localization signal motif. A BRCT domain is found at 27 to 124 (GYEIKFNKLV…RPVDLEKKYH (98 aa)). Residues 258–262 (VGVKT) are involved in DNA binding. Residues 333–338 (GFRRGK) and 342–345 (HDID) each bind a 2'-deoxyribonucleoside 5'-triphosphate. Mg(2+) contacts are provided by Asp-343, Asp-345, and Asp-430. Residue 445–446 (GW) participates in a 2'-deoxyribonucleoside 5'-triphosphate binding.

Belongs to the DNA polymerase type-X family. Mg(2+) serves as cofactor.

It localises to the nucleus. It catalyses the reaction DNA(n) + a 2'-deoxyribonucleoside 5'-triphosphate = DNA(n+1) + diphosphate. Functionally, template-independent DNA polymerase which catalyzes the random addition of deoxynucleoside 5'-triphosphate to the 3'-end of a DNA initiator. One of the in vivo functions of this enzyme is the addition of nucleotides at the junction (N region) of rearranged Ig heavy chain and T-cell receptor gene segments during the maturation of B- and T-cells. The chain is DNA nucleotidylexotransferase (DNTT) from Gallus gallus (Chicken).